The sequence spans 29 residues: Trypsin inhibitor 1 (29 aa).

3 disulfide bridges follow: C3-C20, C10-C22, and C16-C28.

The protein belongs to the protease inhibitor I7 (squash-type serine protease inhibitor) family.

Its subcellular location is the secreted. In terms of biological role, inhibits trypsin. This is Trypsin inhibitor 1 from Luffa aegyptiaca (Sponge gourd).